The chain runs to 92 residues: Alpha-conotoxin VxXXA (92 aa).

A signal peptide spans methionine 1 to glycine 24. A propeptide spanning residues glutamine 25 to arginine 45 is cleaved from the precursor. Proline 55, proline 70, and proline 74 each carry 4-hydroxyproline; partial. 4 cysteine pairs are disulfide-bonded: cysteine 63-cysteine 72, cysteine 68-cysteine 80, cysteine 73-cysteine 90, and cysteine 78-cysteine 92.

Belongs to the conotoxin D superfamily. In terms of assembly, homodimer or pseudo-homodimer. Three dimers exist: homodimer of VxXXA, pseudo-homodimer of both VxXXA and [hydroxyPro-74]VxXXA and homodimer of [hydroxyPro-74]VxXXA. These three components exist in a 1:2:1 ratio. In terms of processing, vxXXA stands for the form with the Pro-55 hydroxylated. A second major form has both Pro-55 and Pro-74 hydroxylated. The two major forms VxXXA and [hydroxyPro-74]VxXXA exist in a 1:1 ratio. Minor forms are [hydroxyPro-70,hydroxyPro-74]VxXXA and [Pro-55]VxXXA. As to expression, expressed by the venom duct.

It is found in the secreted. In terms of biological role, alpha-conotoxins act on postsynaptic membranes, they bind to the nicotinic acetylcholine receptors (nAChR) and thus inhibit them. Through its two C-terminal domains, this homodimeric protein would bind to two nAChR allosteric sites, located outside the nAChR C-loop of the principal binding face and at the adjacent binding interface in a clockwise direction. This toxin specifically blocks mammalian neuronal nAChR of the alpha-7/CHRNA7, alpha-3-beta-2/CHRNA3-CHRNB2 (IC(50)=370 nM) and alpha-4-beta-2/CHRNA4-CHRNB2 subtypes. VxXXB inhibits alpha-7/CHRNA7 and alpha-3-beta-2/CHRNA3-CHRNB2 nAChR subtypes with the highest efficiency, followed by VxXXA and VxXXC. VxXXB and VxXXC inhibit the alpha-4-beta-2/CHRNA4-CHRNB2 nAChR subtype more efficiently than VxXXA. In Conus vexillum (Flag cone), this protein is Alpha-conotoxin VxXXA.